The primary structure comprises 23 residues: Phallacidin proprotein (23 aa).

Proline 1 is a propeptide. A cross-link (cyclopeptide (Ala-Pro)) is located at residues 2-8 (AWLVDCP). A cross-link (2'-cysteinyl-6'-hydroxytryptophan sulfoxide (Trp-Cys)) is located at residues 3–7 (WLVDC). Residues 9-23 (CVGDDISRLLTRGEK) constitute a propeptide that is removed on maturation.

Belongs to the MSDIN fungal toxin family. In terms of processing, processed by the macrocyclase-peptidase enzyme POPB to yield a toxic cyclic heptapeptide. POPB first removes 10 residues from the N-terminus. Conformational trapping of the remaining peptide forces the enzyme to release this intermediate rather than proceed to macrocyclization. The enzyme rebinds the remaining peptide in a different conformation and catalyzes macrocyclization of the N-terminal 7 residues.

Functionally, major toxin that belongs to the bicyclic heptapeptides called phallotoxins. Although structurally related to amatoxins, phallotoxins have a different mode of action, which is the stabilization of F-actin. Phallotoxins are poisonous when administered parenterally, but not orally because of poor absorption. In Amanita rimosa, this protein is Phallacidin proprotein.